The following is a 152-amino-acid chain: 1,4-dihydroxy-2-naphthoyl-CoA hydrolase (152 aa).

D20 is a catalytic residue.

Belongs to the 4-hydroxybenzoyl-CoA thioesterase family. DHNA-CoA hydrolase subfamily.

It carries out the reaction 1,4-dihydroxy-2-naphthoyl-CoA + H2O = 1,4-dihydroxy-2-naphthoate + CoA + H(+). Its pathway is cofactor biosynthesis; phylloquinone biosynthesis. It participates in quinol/quinone metabolism; 1,4-dihydroxy-2-naphthoate biosynthesis; 1,4-dihydroxy-2-naphthoate from chorismate: step 7/7. Its function is as follows. Catalyzes the hydrolysis of 1,4-dihydroxy-2-naphthoyl-CoA (DHNA-CoA) to 1,4-dihydroxy-2-naphthoate (DHNA), a reaction involved in phylloquinone (vitamin K1) biosynthesis. This is 1,4-dihydroxy-2-naphthoyl-CoA hydrolase from Synechococcus sp. (strain CC9311).